We begin with the raw amino-acid sequence, 880 residues long: Potassium transport protein 2 (880 aa).

Residue N9 is glycosylated (N-linked (GlcNAc...) asparagine). The next 2 membrane-spanning stretches (helical) occupy residues 28-48 and 84-104; these read FVQDSFIIGMTILCSVILYGS and TILLFGVLSTPITVNLGLTLF. A disordered region spans residues 157–182; that stretch reads MHRPVAPETKAEEAEHQENEKHHRHH. Residues 165–177 show a composition bias toward basic and acidic residues; it reads TKAEEAEHQENEK. 7 N-linked (GlcNAc...) asparagine glycosylation sites follow: N239, N283, N293, N294, N321, N443, and N460. A compositionally biased stretch (polar residues) spans 289-315; sequence HHLDNNSSISSHNPSLETANDGNQETV. A disordered region spans residues 289–344; the sequence is HHLDNNSSISSHNPSLETANDGNQETVSSSNSNYSTTRVDNDPHVASYSPQNSNFD. Low complexity predominate over residues 316-325; that stretch reads SSSNSNYSTT. The next 6 membrane-spanning stretches (helical) occupy residues 494 to 514, 571 to 591, 625 to 645, 684 to 704, 756 to 776, and 787 to 807; these read ILVVYFLFWHILGLVAFLIFI, LIFLGNTFFPIMLRFIIWIMI, WVLFLNLTLLNFASFFFFMVL, IAPAVMVTYMFMMYISAYPIA, QLSHDLWYLFLGYFIITIVEG, and FTLFAILFEVISGYGTVGLSL. The segment at 857–880 is disordered; the sequence is REEEDYMRRHGKKNTNRADPVPSS.

This sequence belongs to the TrkH potassium transport family.

The protein localises to the cell membrane. Together with TRK1, defines the major, high-affinity potassium influx transport system. Involved in maintenance of the proper sodium/potassium ratio in the cell and in regulating the plasma membrane potential. The sequence is that of Potassium transport protein 2 (trk2) from Schizosaccharomyces pombe (strain 972 / ATCC 24843) (Fission yeast).